The chain runs to 650 residues: Protein ANTI-SILENCING 1 (650 aa).

One can recognise a BAH domain in the interval 38 to 169 (DEYRLYDCVL…VGSCKVVDTI (132 aa)). Disordered regions lie at residues 202–223 (NGKS…GSVR), 229–248 (AFES…EKEK), 257–359 (KSTL…QKLD), and 425–448 (VTEK…ADDN). Basic and acidic residues-rich tracts occupy residues 259-270 (TLAEERSNKDSG) and 277-287 (NGKDQESEVKK). Positions 302-315 (SNSFEASGSRTIHS) are enriched in polar residues. Composition is skewed to basic and acidic residues over residues 348–358 (LDDRPLKKQKL) and 438–448 (RAEDKMSADDN). Residues 486–569 (TVVLLQNLDP…RPLVASFAKI (84 aa)) form the RRM domain.

Component of the ASI1-AIPP1-EDM2 (AAE) RNA regulatory complex composed of at least AIPP1/EDM3, ASI1 and EDM2 and may contain CPL2, AIPP2 and AIPP3/BDT1. Binds directly to AIPP1/EDM3 and AIPP2.

Its function is as follows. Collaboratively with AIPP1/EDM3 and EDM2, the AAE complex regulates alternative RNA processing (e.g. alternative splicing) and epigenetic silencing (e.g. H3K9me2) of intronic heterochromatin-containing genes as well as genic heterochromatin-containing genes by promoting distal 3' polyadenylation; may associate with intronic heterochromatin and bind gene transcripts to modulate polyadenylation. Required to prevent promoter DNA hypermethylation and transcriptional silencing of some transgenes. Plays a similar role to that of the histone H3K9 demethylase JMJ25/IBM1 in preventing CHG methylation in the bodies of numerous genes. RNA-binding protein that ensures the proper expression of JMJ25/IBM1 full-length transcript by associating with an intronic heterochromatic repeat element of JMJ25/IBM1. Also modulates transposable elements (TE) expression. Contributes to a unique mechanism to deal with the collateral effect of silencing intronic repeat elements. This is Protein ANTI-SILENCING 1 from Arabidopsis thaliana (Mouse-ear cress).